A 578-amino-acid chain; its full sequence is Dapdiamide synthesis protein DdaD (578 aa).

A Carrier domain is found at 498–573; sequence ESISATEHQI…KMAAWLDASS (76 aa). Residue Ser533 is modified to O-(pantetheine 4'-phosphoryl)serine.

Belongs to the ATP-dependent AMP-binding enzyme family. The cofactor is pantetheine 4'-phosphate.

It participates in antibiotic biosynthesis. Functionally, involved in dapdiamide antibiotics biosynthesis. Activates and sequesters N-beta-fumaramoyl-DAP as a covalently tethered thioester for subsequent oxidative modification of the fumaramoyl group. The polypeptide is Dapdiamide synthesis protein DdaD (Enterobacter agglomerans (Erwinia herbicola)).